The primary structure comprises 705 residues: Polyribonucleotide nucleotidyltransferase (705 aa).

Mg(2+) is bound by residues Asp-487 and Asp-493. One can recognise a KH domain in the interval 554–613; that stretch reads PKILTMKINPDKIRDVIGPSGKQINKIIEDTGVKIDIEQDGTIFISSTEEDMNQKAKKII. An S1 motif domain is found at 623–691; the sequence is GQLYLGKVKR…KQGRVNLSRK (69 aa).

The protein belongs to the polyribonucleotide nucleotidyltransferase family. Requires Mg(2+) as cofactor.

Its subcellular location is the cytoplasm. The enzyme catalyses RNA(n+1) + phosphate = RNA(n) + a ribonucleoside 5'-diphosphate. Functionally, involved in mRNA degradation. Catalyzes the phosphorolysis of single-stranded polyribonucleotides processively in the 3'- to 5'-direction. This is Polyribonucleotide nucleotidyltransferase from Bacillus pumilus (strain SAFR-032).